We begin with the raw amino-acid sequence, 62 residues long: ATP synthase subunit K, mitochondrial (62 aa).

Residues 14–30 (HHLAIATIGTVVALVAP) form a helical membrane-spanning segment.

As to quaternary structure, F-type ATP synthases have 2 components, the catalytic core F(1) and the membrane-embedded component F(0), linked together by a central stalk and a peripheral stalk. The central stalk, also called rotor shaft, is often seen as part of F(1). The peripheral stalk is seen as part of F(0). F(0) contains the membrane channel next to the rotor. F-type ATP synthases form dimers but each monomer functions independently in ATP generation. The dimer consists of 18 different polypeptides: ATP1 (subunit alpha, part of F(1), 3 molecules per monomer), ATP2 (subunit beta, part of F(1), 3 molecules per monomer), ATP3 (subunit gamma, part of the central stalk), ATP4 (subunit b, part of the peripheral stalk), ATP5/OSCP (subunit 5/OSCP, part of the peripheral stalk), ATP6 (subunit a, part of the peripheral stalk), ATP7 (subunit d, part of the peripheral stalk), ATP8 (subunit 8, part of the peripheral stalk), OLI1 (subunit c, part of the rotor, 10 molecules per monomer), ATP14 (subunit h, part of the peripheral stalk), ATP15 (subunit epsilon, part of the central stalk), ATP16 (subunit delta, part of the central stalk), ATP17 (subunit f, part of the peripheral stalk), ATP18 (subunit i/j, part of the peripheral stalk). Dimer-specific subunits are ATP19 (subunit k, at interface between monomers), ATP20 (subunit g, at interface between monomers), TIM11 (subunit e, at interface between monomers). Also contains subunit L.

It localises to the mitochondrion inner membrane. Functionally, mitochondrial membrane ATP synthase (F(1)F(0) ATP synthase or Complex V) produces ATP from ADP in the presence of a proton gradient across the membrane which is generated by electron transport complexes of the respiratory chain. F-type ATP synthases consist of two structural domains, F(1) - containing the extramembraneous catalytic core, and F(0) - containing the membrane proton channel, linked together by a central stalk and a peripheral stalk. During catalysis, ATP synthesis in the catalytic domain of F(1) is coupled via a rotary mechanism of the central stalk subunits to proton translocation. Part of the complex F(0) domain. Minor subunit located with subunit a/ATP6 in the membrane. The K chain binds the dimeric form by interacting with the G and E chains. This is ATP synthase subunit K, mitochondrial from Pichia angusta (Yeast).